The sequence spans 619 residues: Chitinase C (619 aa).

The first 30 residues, 1–30 (MRFRHKAAALAATLALPLAGLVGLASPAQA), serve as a signal peptide directing secretion. A CBM2 domain is found at 31 to 134 (ATSATATFAK…KLNGGSCDGT (104 aa)). The 86-residue stretch at 144–229 (APGTPTASNI…GAVKVTTTGG (86 aa)) folds into the Fibronectin type-III domain. Positions 212–236 (ADQTGPASGAVKVTTTGGGDGGNPG) are disordered. The segment covering 227–236 (TGGGDGGNPG) has biased composition (gly residues). The 380-residue stretch at 240-619 (EVKMGYFTNW…TPAVRTTRRH (380 aa)) folds into the GH18 domain. Residues 312 to 313 (DQ) and 339 to 342 (GGWT) each bind chitin. E382 (proton donor) is an active-site residue. Residues Y383, 449 to 452 (MTYD), and W589 each bind chitin.

This sequence belongs to the glycosyl hydrolase 18 family. Chitinase class II subfamily.

It catalyses the reaction Random endo-hydrolysis of N-acetyl-beta-D-glucosaminide (1-&gt;4)-beta-linkages in chitin and chitodextrins.. The chain is Chitinase C (chiC) from Streptomyces lividans.